A 67-amino-acid chain; its full sequence is Probable Sec-independent protein translocase protein TatE (67 aa).

Residues 4-21 (ISITKLLVVAALVVLLFG) form a helical membrane-spanning segment.

The protein belongs to the TatA/E family. TatE subfamily.

The protein localises to the cell inner membrane. In terms of biological role, part of the twin-arginine translocation (Tat) system that transports large folded proteins containing a characteristic twin-arginine motif in their signal peptide across membranes. TatE shares overlapping functions with TatA. In Enterobacter cloacae subsp. cloacae (strain ATCC 13047 / DSM 30054 / NBRC 13535 / NCTC 10005 / WDCM 00083 / NCDC 279-56), this protein is Probable Sec-independent protein translocase protein TatE.